Here is a 597-residue protein sequence, read N- to C-terminus: Elongation factor 4 (597 aa).

In terms of domain architecture, tr-type G spans 2 to 184 (KNIRNFSIIA…TIVAKVPAPE (183 aa)). GTP-binding positions include 14 to 19 (DHGKST) and 131 to 134 (NKID).

It belongs to the TRAFAC class translation factor GTPase superfamily. Classic translation factor GTPase family. LepA subfamily.

It is found in the cell inner membrane. It catalyses the reaction GTP + H2O = GDP + phosphate + H(+). Functionally, required for accurate and efficient protein synthesis under certain stress conditions. May act as a fidelity factor of the translation reaction, by catalyzing a one-codon backward translocation of tRNAs on improperly translocated ribosomes. Back-translocation proceeds from a post-translocation (POST) complex to a pre-translocation (PRE) complex, thus giving elongation factor G a second chance to translocate the tRNAs correctly. Binds to ribosomes in a GTP-dependent manner. This chain is Elongation factor 4, found in Francisella tularensis subsp. mediasiatica (strain FSC147).